Reading from the N-terminus, the 472-residue chain is Methanethiol oxidase (472 aa).

Alanine 2 is subject to N-acetylalanine. Serine 467 carries the phosphoserine modification.

It belongs to the selenium-binding protein family. As to quaternary structure, interacts with USP33. The N-terminus is blocked.

The protein resides in the nucleus. Its subcellular location is the cytoplasm. It localises to the cytosol. It is found in the membrane. It catalyses the reaction methanethiol + O2 + H2O = hydrogen sulfide + formaldehyde + H2O2 + H(+). It functions in the pathway organosulfur degradation. In terms of biological role, catalyzes the oxidation of methanethiol, an organosulfur compound known to be produced in substantial amounts by gut bacteria. Selenium-binding protein which may be involved in the sensing of reactive xenobiotics in the cytoplasm. May be involved in intra-Golgi protein transport. The sequence is that of Methanethiol oxidase (SELENBP1) from Bos taurus (Bovine).